Consider the following 120-residue polypeptide: NAD(P)H-quinone oxidoreductase subunit 3, chloroplastic (120 aa).

Helical transmembrane passes span 9-29, 64-84, and 88-108; these read IFWAFLIISSLIPILAFFVSG, MFALVFVVFDVETVFLYPWAM, and VLGISVFVEALIFVLILIVGL.

Belongs to the complex I subunit 3 family. NDH is composed of at least 16 different subunits, 5 of which are encoded in the nucleus.

It is found in the plastid. The protein localises to the chloroplast thylakoid membrane. The enzyme catalyses a plastoquinone + NADH + (n+1) H(+)(in) = a plastoquinol + NAD(+) + n H(+)(out). It carries out the reaction a plastoquinone + NADPH + (n+1) H(+)(in) = a plastoquinol + NADP(+) + n H(+)(out). In terms of biological role, NDH shuttles electrons from NAD(P)H:plastoquinone, via FMN and iron-sulfur (Fe-S) centers, to quinones in the photosynthetic chain and possibly in a chloroplast respiratory chain. The immediate electron acceptor for the enzyme in this species is believed to be plastoquinone. Couples the redox reaction to proton translocation, and thus conserves the redox energy in a proton gradient. This chain is NAD(P)H-quinone oxidoreductase subunit 3, chloroplastic, found in Daucus carota (Wild carrot).